The chain runs to 490 residues: Cysteine--tRNA ligase (490 aa).

Cysteine 36 is a binding site for Zn(2+). A 'HIGH' region motif is present at residues 38-48; that stretch reads VTVYDYSHIGH. 3 residues coordinate Zn(2+): cysteine 216, histidine 241, and glutamate 245. The 'KMSKS' region signature appears at 278–282; that stretch reads KMSKS. Lysine 281 lines the ATP pocket.

The protein belongs to the class-I aminoacyl-tRNA synthetase family. As to quaternary structure, monomer. The cofactor is Zn(2+).

It localises to the cytoplasm. It catalyses the reaction tRNA(Cys) + L-cysteine + ATP = L-cysteinyl-tRNA(Cys) + AMP + diphosphate. This is Cysteine--tRNA ligase from Magnetococcus marinus (strain ATCC BAA-1437 / JCM 17883 / MC-1).